Reading from the N-terminus, the 279-residue chain is Thymidylate synthase (279 aa).

Arg-141–Arg-142 contacts dUMP. Residue Cys-161 is the Nucleophile of the active site. Residues Arg-181–Asp-184, Asn-192, and His-222–Tyr-224 each bind dUMP. Residue Asp-184 participates in (6R)-5,10-methylene-5,6,7,8-tetrahydrofolate binding. Ala-278 serves as a coordination point for (6R)-5,10-methylene-5,6,7,8-tetrahydrofolate.

This sequence belongs to the thymidylate synthase family. Bacterial-type ThyA subfamily. In terms of assembly, homodimer.

The protein localises to the cytoplasm. The enzyme catalyses dUMP + (6R)-5,10-methylene-5,6,7,8-tetrahydrofolate = 7,8-dihydrofolate + dTMP. It participates in pyrimidine metabolism; dTTP biosynthesis. Functionally, catalyzes the reductive methylation of 2'-deoxyuridine-5'-monophosphate (dUMP) to 2'-deoxythymidine-5'-monophosphate (dTMP) while utilizing 5,10-methylenetetrahydrofolate (mTHF) as the methyl donor and reductant in the reaction, yielding dihydrofolate (DHF) as a by-product. This enzymatic reaction provides an intracellular de novo source of dTMP, an essential precursor for DNA biosynthesis. The polypeptide is Thymidylate synthase (Bacillus licheniformis (strain ATCC 14580 / DSM 13 / JCM 2505 / CCUG 7422 / NBRC 12200 / NCIMB 9375 / NCTC 10341 / NRRL NRS-1264 / Gibson 46)).